Here is a 538-residue protein sequence, read N- to C-terminus: Cytochrome P450 monooxygenase cfoH (538 aa).

Residues Val-24–Phe-44 traverse the membrane as a helical segment. Residue Cys-471 participates in heme binding.

The protein belongs to the cytochrome P450 family. Heme is required as a cofactor.

It is found in the membrane. The protein operates within secondary metabolite biosynthesis; flavonoid biosynthesis. Cytochrome P450 monooxygenase; part of the gene cluster that mediates the biosynthesis of chlorflavonin, a fungal flavonoid with acetolactate synthase inhibitory activity. Within the pathway, cfoH is responsible for the hydroxylation of the flavonoid skeleton at position C2'. The pathway begins with the PKS-NRPS hybrid synthetase cfoA that uses benzoic acid or p-hydroxybenzoic acid as a starter unit with four rounds of chain elongation using malonyl-CoA to form the chalcone skeleton. Then, a new type of chalcone isomerase, cfoK, catalyzes the conversion of the chalcone into a flavanone by a histidine-mediated oxa-Michael addition mechanism. The desaturation of flavanone to flavone is catalyzed by a new type of flavone synthase, the flavin mononucleotide (FMN)-dependent oxidoreductase cfoJ. Monooxygenases cfoF, cfoG, and P450 cfoH are responsible for the hydroxylation of the flavonoid skeleton at sites C3, C8, and C2', respectively. Like cfoF, the dehydratase cfoI plays also a role in the hydroxylation of position C3. Methyltransferases cfoB, cfoC, and cfoD then catalyze the methylation of C7-OH, C8-OH, and C3-OH, respectively. Finally, the monooxygenase cfoE is responsible for the chlorination of flavonoid at position C3'. The chain is Cytochrome P450 monooxygenase cfoH from Aspergillus candidus.